The chain runs to 94 residues: Ribonuclease P protein component 1 (94 aa).

Belongs to the eukaryotic/archaeal RNase P protein component 1 family. As to quaternary structure, consists of a catalytic RNA component and at least 4-5 protein subunits.

Its subcellular location is the cytoplasm. The catalysed reaction is Endonucleolytic cleavage of RNA, removing 5'-extranucleotides from tRNA precursor.. Its function is as follows. Part of ribonuclease P, a protein complex that generates mature tRNA molecules by cleaving their 5'-ends. The protein is Ribonuclease P protein component 1 of Haloarcula marismortui (strain ATCC 43049 / DSM 3752 / JCM 8966 / VKM B-1809) (Halobacterium marismortui).